The primary structure comprises 569 residues: Urease subunit beta (569 aa).

Positions 131–569 constitute a Urease domain; sequence GGIDTHIHFI…VSLAQLFSIF (439 aa). Residues His-136, His-138, and Lys-219 each coordinate Ni(2+). Position 219 is an N6-carboxylysine (Lys-219). Position 221 (His-221) interacts with substrate. Residues His-248 and His-274 each coordinate Ni(2+). The active-site Proton donor is the His-322. Asp-362 is a binding site for Ni(2+).

This sequence belongs to the metallo-dependent hydrolases superfamily. Urease alpha subunit family. In terms of assembly, heterohexamer of 3 UreA (alpha) and 3 UreB (beta) subunits. Four heterohexamers assemble to form a 16 nm dodecameric complex. The cofactor is Ni cation. Post-translationally, carboxylation allows a single lysine to coordinate two nickel ions.

The protein localises to the cytoplasm. The catalysed reaction is urea + 2 H2O + H(+) = hydrogencarbonate + 2 NH4(+). The protein operates within nitrogen metabolism; urea degradation; CO(2) and NH(3) from urea (urease route): step 1/1. Functionally, ammonia produced by ureolysis increases the gastric pH thereby providing an environment permissive for colonization of the stomach. This Helicobacter pylori (strain J99 / ATCC 700824) (Campylobacter pylori J99) protein is Urease subunit beta.